Reading from the N-terminus, the 134-residue chain is DNA-binding protein H-NS (134 aa).

The DNA-binding element occupies 111–116 (QGRTLA).

This sequence belongs to the histone-like protein H-NS family. As to quaternary structure, homodimer that oligomerizes on DNA into higher-order complexes that form bridges between disparate regions of DNA compacting it. Interacts with YmoA and other similar proteins.

Its subcellular location is the cytoplasm. The protein resides in the nucleoid. Its function is as follows. A DNA-binding protein implicated in transcriptional repression and chromosome organization and compaction. Binds nucleation sites in AT-rich DNA and bridges them, forming higher-order nucleoprotein complexes and condensing the chromosome. As many horizontally transferred genes are AT-rich, it plays a central role in silencing foreign genes. A subset of genes are repressed by H-NS in association with other proteins. In Proteus vulgaris, this protein is DNA-binding protein H-NS (hns).